A 457-amino-acid chain; its full sequence is tRNA-2-methylthio-N(6)-dimethylallyladenosine synthase (457 aa).

Residues 2–119 enclose the MTTase N-terminal domain; it reads KKVFIKTFGC…LPELIDARRR (118 aa). [4Fe-4S] cluster is bound by residues Cys11, Cys48, Cys82, Cys156, Cys160, and Cys163. A Radical SAM core domain is found at 142-375; sequence RVEGPSAFVS…QATIDANMAR (234 aa). Residues 378–448 enclose the TRAM domain; it reads EGMVGSVQRI…PHSLRGDVVE (71 aa).

It belongs to the methylthiotransferase family. MiaB subfamily. As to quaternary structure, monomer. [4Fe-4S] cluster is required as a cofactor.

The protein localises to the cytoplasm. It carries out the reaction N(6)-dimethylallyladenosine(37) in tRNA + (sulfur carrier)-SH + AH2 + 2 S-adenosyl-L-methionine = 2-methylsulfanyl-N(6)-dimethylallyladenosine(37) in tRNA + (sulfur carrier)-H + 5'-deoxyadenosine + L-methionine + A + S-adenosyl-L-homocysteine + 2 H(+). In terms of biological role, catalyzes the methylthiolation of N6-(dimethylallyl)adenosine (i(6)A), leading to the formation of 2-methylthio-N6-(dimethylallyl)adenosine (ms(2)i(6)A) at position 37 in tRNAs that read codons beginning with uridine. In Ralstonia nicotianae (strain ATCC BAA-1114 / GMI1000) (Ralstonia solanacearum), this protein is tRNA-2-methylthio-N(6)-dimethylallyladenosine synthase.